We begin with the raw amino-acid sequence, 1131 residues long: MSVVERRQINAAINLRLSLLGLPHPDSNAESPDAILVEPLLARQRELSRRLKDRLSAPDLRIQRFLDDYLADCDEHPQLPRTTLVLDEPGLARGLSLPVDGDEFHSDIVASYRLVNGVLHNPKHDRRTTAGVFHISTGGLPIPQDKVEVDKNVYARILARAFQAPDEELALPYTANLPEQAHCWASLLMRPTVLPAVPGRTTEKSYEVHFIVPGGLMCNLDFVEGIFGNAGDPYLPENDASLDPDSWTGHTGCVILAPHLTTMTKKSLGMPHYDDATERQRRDGQCWRHEDDLYNDGKAFKVCARDERGVIVTVIADNYFGYCKKEVKTQISYSANLLGGAEEEHSGGAEVYPAWNLNQDFTDRTPDDFTLADVISTNRELLDVRPEGYAVYKPEPNIVFIPEHSHYSMRTQTISWTAHGAEQTIKLLAGKHYLSPDGYRIHAKHREMDATQWHLIGTSSRAVTCHKPATVSGGGKSEISKSISDAFVFGNAFSHDIDSAMDQVQALFDTDFTNRFADASRNGTDHRPVLSIDRSLGSVIKLLTPSIQYNDEYNAFLEGIEPDVKELAFTVKRYYLPEWGEDWRSHFTVGIMNGRHGNMVRLDGKKIITNMLRVGFREDGSWRLFTLRPDYSPAVKVQTEDDITASTVTPPWEDAEGLPRKYVTNCEHLLFQRPDDAIHRGYDKQAEFDLASGTDTFISNFEPLTHEQARDLLTDVQAYSEFTKPVRKLIERVAAMPDDQSPEFWVCSDDPRHLPDGGRSKNPRYLQVRPTDSNPELTTVADVAGKLARKLPLAGHAPQPIDVVAAGRRNNPPEDKVPALCAYNPLHYMELPELFMEYISSMTGKSPSTTGAGSEGALTKGPFNALPAVYDLNAALLSYALTDYDGWLSSAGYIGPNARVDHDISMLIPELFSHMGPNDRNTKRLISEGYLEKMQDFDFDGHRVLASRLGYRINDRFVTHYFGRIFLHPDVVFSEEMLRPELQDEKIFADSIDVIVKTHQRVAQMYFDDGTVSLACPPIRALLEIMAHGASAEGWTLDSPEFRKLFERESVLASDWYAQRLDAKQAEDVKQAEEGVERLKEYIGRSDSGSVTGRLHLADRLRELEAQLTYERSPEYRQSLVGTLGRQPRFV.

The protein belongs to the PPi-type phosphoenolpyruvate carboxykinase family. As to quaternary structure, monomer and trimer; forms heterotrimers with PEPCK2 and PEPCK3.

It carries out the reaction oxaloacetate + diphosphate = phosphoenolpyruvate + phosphate + CO2. In terms of biological role, inorganic pyrophosphate (PPi)-dependent phosphoenolpyruvate carboxykinase, which regulates the carbon flow of the central metabolism by fixing CO(2) to phosphoenolpyruvate to produce oxaloacetate. Can also produce pyruvate and diphosphate from phosphoenolpyruvate and phosphate. This chain is PPi-type phosphoenolpyruvate carboxykinase, found in Propionibacterium freudenreichii subsp. freudenreichii.